A 686-amino-acid chain; its full sequence is Ovotransferrin (686 aa).

Transferrin-like domains are found at residues 7 to 333 (VRWC…SLRK) and 345 to 670 (IQWC…SLNT). Intrachain disulfides connect cysteine 10–cysteine 45, cysteine 20–cysteine 36, cysteine 115–cysteine 197, cysteine 160–cysteine 174, cysteine 171–cysteine 182, and cysteine 228–cysteine 242. The connecting region stretch occupies residues 333–341 (KDQLTVGPR). 9 disulfides stabilise this stretch: cysteine 348–cysteine 380, cysteine 358–cysteine 371, cysteine 405–cysteine 680, cysteine 421–cysteine 643, cysteine 454–cysteine 530, cysteine 478–cysteine 671, cysteine 488–cysteine 502, cysteine 499–cysteine 513, and cysteine 570–cysteine 584. N-linked (GlcNAc...) asparagine glycosylation occurs at asparagine 473. A glycan (N-linked (GlcNAc...) asparagine) is linked at asparagine 548.

This sequence belongs to the transferrin family. In terms of assembly, monomer.

The protein resides in the secreted. Its function is as follows. Transferrins are iron binding transport proteins which can bind two Fe(3+) ions in association with the binding of an anion, usually bicarbonate. It is responsible for the transport of iron from sites of absorption and heme degradation to those of storage and utilization. Serum transferrin may also have a further role in stimulating cell proliferation. Ovotransferrin has a bacteriostatic function. Its concentration in avian egg is the highest concentration of any transferrin in vivo. The protein is Ovotransferrin of Anas platyrhynchos (Mallard).